A 594-amino-acid chain; its full sequence is UvrABC system protein C (594 aa).

Residues 13–99 (HSSGVYQYFD…IKQLKPKYNI (87 aa)) enclose the GIY-YIG domain. The 36-residue stretch at 205-240 (DKLIKELELKMERLSNNLRFEEALIYRDRIAKIQKI) folds into the UVR domain.

Belongs to the UvrC family. Interacts with UvrB in an incision complex.

It is found in the cytoplasm. The UvrABC repair system catalyzes the recognition and processing of DNA lesions. UvrC both incises the 5' and 3' sides of the lesion. The N-terminal half is responsible for the 3' incision and the C-terminal half is responsible for the 5' incision. In Helicobacter pylori (strain HPAG1), this protein is UvrABC system protein C.